The following is a 474-amino-acid chain: Glycogen synthase (474 aa).

Lysine 15 lines the ADP-alpha-D-glucose pocket.

This sequence belongs to the glycosyltransferase 1 family. Bacterial/plant glycogen synthase subfamily.

The enzyme catalyses [(1-&gt;4)-alpha-D-glucosyl](n) + ADP-alpha-D-glucose = [(1-&gt;4)-alpha-D-glucosyl](n+1) + ADP + H(+). It participates in glycan biosynthesis; glycogen biosynthesis. Functionally, synthesizes alpha-1,4-glucan chains using ADP-glucose. This is Glycogen synthase from Finegoldia magna (strain ATCC 29328 / DSM 20472 / WAL 2508) (Peptostreptococcus magnus).